The sequence spans 460 residues: Cysteine--tRNA ligase (460 aa).

Cys-28 is a Zn(2+) binding site. Positions 30–40 (MTVYDYCHLGH) match the 'HIGH' region motif. Zn(2+) contacts are provided by Cys-209, His-234, and Glu-238. The 'KMSKS' region signature appears at 266-270 (KMSKS). Lys-269 provides a ligand contact to ATP.

Belongs to the class-I aminoacyl-tRNA synthetase family. In terms of assembly, monomer. The cofactor is Zn(2+).

The protein resides in the cytoplasm. The catalysed reaction is tRNA(Cys) + L-cysteine + ATP = L-cysteinyl-tRNA(Cys) + AMP + diphosphate. The chain is Cysteine--tRNA ligase from Pseudomonas putida (strain ATCC 700007 / DSM 6899 / JCM 31910 / BCRC 17059 / LMG 24140 / F1).